The sequence spans 270 residues: Putative carboxymethylenebutenolidase (270 aa).

Catalysis depends on residues cysteine 147, aspartate 204, and histidine 236.

It belongs to the dienelactone hydrolase family.

The catalysed reaction is 2-(5-oxo-2,5-dihydrofuran-2-ylidene)acetate + H2O = 4-oxohex-2-enedioate + H(+). This is Putative carboxymethylenebutenolidase (ysgA) from Salmonella typhimurium (strain LT2 / SGSC1412 / ATCC 700720).